A 74-amino-acid polypeptide reads, in one-letter code: Guanine nucleotide-binding protein G(T) subunit gamma-T1 (74 aa).

At C71 the chain carries Cysteine methyl ester. C71 is lipidated: S-farnesyl cysteine. Residues 72–74 (VIS) constitute a propeptide, removed in mature form.

The protein belongs to the G protein gamma family. G proteins are composed of 3 units, alpha, beta and gamma. Retinal rod outer segment.

The protein localises to the cell membrane. Functionally, guanine nucleotide-binding proteins (G proteins) are involved as a modulator or transducer in various transmembrane signaling systems. The beta and gamma chains are required for the GTPase activity, for replacement of GDP by GTP, and for G protein-effector interaction. This is Guanine nucleotide-binding protein G(T) subunit gamma-T1 (GNGT1) from Canis lupus familiaris (Dog).